A 225-amino-acid chain; its full sequence is UPF0758 protein Swoo_4561 (225 aa).

The MPN domain maps to 102–224 (ILSDPDLTRD…IVSFAERGWI (123 aa)). Residues histidine 173, histidine 175, and aspartate 186 each coordinate Zn(2+). A JAMM motif motif is present at residues 173–186 (HNHPSGVAEPSHAD).

The protein belongs to the UPF0758 family.

The chain is UPF0758 protein Swoo_4561 from Shewanella woodyi (strain ATCC 51908 / MS32).